Consider the following 394-residue polypeptide: MVNDPPVPALLWAQEMGHVMAGRARKLLLQFGVFFCTILLLLWVSVFLYGSFYYSYMPTVSHLSPVHFHYRTDCESSTSLLCSFPVANVTLAKGGRDRVLMYGQPYRVTLELELPESPVNQDLGMFLVTISCYTRGGRIISTSSRSVMLHYRSSLLQMLDTLVFSSLLLFGFAEQKQLLEVELYPEYRENSYVPTTGAIIEIHSKRIQMYGAYLRIHAHFTGLRYLLYNFPMTCAFVGVASNFTFLSVIVLFSYMQWVWGGIWPRQRLSLQVNIRNRKRSRKDIQRKVSAHQPGPQGQEESPQLSPVTEDGESHADPSGTEGQLSEEEKTEQQPLSGEEELEPEASDGSGSWEDAALLTEANLAASGSAPAPETVGSSEPSAGSVRQRPICSSS.

The Cytoplasmic portion of the chain corresponds to 1–27; that stretch reads MVNDPPVPALLWAQEMGHVMAGRARKL. A helical transmembrane segment spans residues 28 to 48; the sequence is LLQFGVFFCTILLLLWVSVFL. At 49-242 the chain is on the lumenal side; that stretch reads YGSFYYSYMP…TCAFVGVASN (194 aa). Residues Asn88 and Asn242 are each glycosylated (N-linked (GlcNAc...) asparagine). Residues 243–263 traverse the membrane as a helical segment; that stretch reads FTFLSVIVLFSYMQWVWGGIW. Over 264–394 the chain is Cytoplasmic; that stretch reads PRQRLSLQVN…VRQRPICSSS (131 aa). Residues 281-394 form a disordered region; the sequence is RKDIQRKVSA…VRQRPICSSS (114 aa). The residue at position 289 (Ser289) is a Phosphoserine. Positions 292 to 303 are enriched in low complexity; the sequence is QPGPQGQEESPQ. A phosphoserine mark is found at Ser346 and Ser351.

This sequence belongs to the seipin family. In terms of assembly, undecamer (an oligomer having eleven subunits). Oligomerization is important for its function in lipid droplet formation. Interacts with LDAF1 to form an oligomeric complex. Interacts with RAB18. Interacts with ZFYVE1 in a RAB18-dependent manner.

Its subcellular location is the endoplasmic reticulum membrane. It is found in the lipid droplet. Its function is as follows. Plays a crucial role in the formation of lipid droplets (LDs) which are storage organelles at the center of lipid and energy homeostasis. In association with LDAF1, defines the sites of LD formation in the ER. Also required for growth and maturation of small nascent LDs into larger mature LDs. Mediates the formation and/or stabilization of endoplasmic reticulum-lipid droplets (ER-LD) contacts, facilitating protein and lipid delivery from the ER into growing LDs. Regulates the maturation of ZFYVE1-positive nascent LDs and the function of the RAB18-ZFYVE1 complex in mediating the formation of ER-LD contacts. Binds anionic phospholipids including phosphatidic acid. Plays an important role in the differentiation and development of adipocytes. The polypeptide is Seipin (Bos taurus (Bovine)).